A 560-amino-acid chain; its full sequence is Membrane protein insertase YidC (560 aa).

A helical transmembrane segment spans residues Met-1–Leu-21. The disordered stretch occupies residues Val-42–Ala-66. A run of 5 helical transmembrane segments spans residues Leu-341–Leu-361, Leu-367–Phe-387, Leu-437–Leu-457, Trp-468–Met-488, and Pro-515–Val-535.

This sequence belongs to the OXA1/ALB3/YidC family. Type 1 subfamily. In terms of assembly, interacts with the Sec translocase complex via SecD. Specifically interacts with transmembrane segments of nascent integral membrane proteins during membrane integration.

It is found in the cell inner membrane. Its function is as follows. Required for the insertion and/or proper folding and/or complex formation of integral membrane proteins into the membrane. Involved in integration of membrane proteins that insert both dependently and independently of the Sec translocase complex, as well as at least some lipoproteins. Aids folding of multispanning membrane proteins. The sequence is that of Membrane protein insertase YidC from Pseudomonas putida (strain ATCC 47054 / DSM 6125 / CFBP 8728 / NCIMB 11950 / KT2440).